We begin with the raw amino-acid sequence, 466 residues long: GTPase Der (466 aa).

2 EngA-type G domains span residues 3–167 (PTLV…PDEP) and 176–350 (PKIA…GAAM). Residues 9–16 (GRSNVGKS), 56–60 (DTGGF), 119–122 (NKTE), 182–189 (GRPNVGKS), 229–233 (DTAGL), and 294–297 (NKWD) each bind GTP. A KH-like domain is found at 351–435 (AHLPTPRLTR…PLRIEFRTGR (85 aa)). A disordered region spans residues 433–466 (TGRNPYAGKSPAPLTEAEAKRAHRRRRYGRKKYG). A compositionally biased stretch (basic residues) spans 453 to 466 (RAHRRRRYGRKKYG).

This sequence belongs to the TRAFAC class TrmE-Era-EngA-EngB-Septin-like GTPase superfamily. EngA (Der) GTPase family. As to quaternary structure, associates with the 50S ribosomal subunit.

Its function is as follows. GTPase that plays an essential role in the late steps of ribosome biogenesis. This chain is GTPase Der, found in Nitrosospira multiformis (strain ATCC 25196 / NCIMB 11849 / C 71).